The following is a 119-amino-acid chain: Putative F420H(2)-dependent quinone reductase Rv3178 (119 aa).

Residues 21 to 23, 27 to 32, 43 to 46, and 54 to 58 contribute to the coenzyme F420-(gamma-Glu)n site; these read RKS, FVAPLL, VASA, and QWYRN.

It belongs to the F420H(2)-dependent quinone reductase family.

The protein resides in the cell membrane. The enzyme catalyses oxidized coenzyme F420-(gamma-L-Glu)(n) + a quinol + H(+) = reduced coenzyme F420-(gamma-L-Glu)(n) + a quinone. Functionally, involved in a F420-dependent anti-oxidant mechanism that protects M.tuberculosis against oxidative stress and bactericidal agents. Catalyzes the F420H(2)-dependent two-electron reduction of quinones to dihydroquinones, thereby preventing the formation of cytotoxic semiquinones obtained by the one-electron reduction pathway. Since menaquinone is the sole quinone electron carrier in the respiratory chain in M.tuberculosis, the physiological electron acceptor for Fqr-mediated F420H(2) oxidation is therefore likely to be the endogenous menaquinone found in the membrane fraction of M.tuberculosis. In Mycobacterium tuberculosis (strain ATCC 25618 / H37Rv), this protein is Putative F420H(2)-dependent quinone reductase Rv3178.